The primary structure comprises 846 residues: SLIT and NTRK-like protein 2 (846 aa).

An N-terminal signal peptide occupies residues 1-21 (MLSGVWFLSVLTVAGILQTES). The Extracellular portion of the chain corresponds to 22-622 (RKTAKDICKI…LHTEVPLSVL (601 aa)). Disulfide bonds link Cys-29/Cys-35 and Cys-33/Cys-46. LRR repeat units lie at residues 63–84 (RIYQLFLNGNLLTRLYPNEFVN), 87–108 (NAVTLHLGNNGLQEIRPGAFSG), 111–132 (TLKRLHLNNNKLEVLREDTFLG), 135–156 (SLEYLQADYNYISTIEAGAFSK), 159–180 (KLKVLILNDNLLLSLPSNVFRF), and 182–203 (LLTHLDLRGNRLKVMPFAGVLE). Asn-84 carries an N-linked (GlcNAc...) asparagine glycan. The interval 167 to 215 (DNLLLSLPSNVFRFVLLTHLDLRGNRLKVMPFAGVLEHIGGIMEIQLEE) is required for interaction with PTPRD. The LRRCT 1 domain occupies 216-265 (NPWNCTCDLLPLKAWLDTITVFVGEIVCETPFRLHGKDVTQLTRQDLCPR). The N-linked (GlcNAc...) asparagine glycan is linked to Asn-219. 2 cysteine pairs are disulfide-bonded: Cys-220–Cys-243 and Cys-222–Cys-263. The tract at residues 261–322 (DLCPRKSASG…TPRVTVSKDR (62 aa)) is disordered. 2 stretches are compositionally biased toward low complexity: residues 267 to 276 (SASGDSSQRS) and 285 to 300 (RLTPTTNPALNPTRAP). One can recognise an LRRNT domain in the interval 332–374 (QTKSPVALTCPSSCVCTSQSSDNGLNVNCQERKFTNISDLQPK). LRR repeat units lie at residues 377 to 398 (SPKKLYLTGNYLQTVYKNDLLE), 401 to 422 (SLDLLHLGNNRIAVIQEGAFTN), 425 to 446 (SLRRLYLNGNYLEVLYPSMFDG), 449 to 470 (SLQYLYLEYNVIKEIKPLTFDA), 473 to 494 (NLQLLFLNNNLLRSLPDNIFGG), and 496 to 517 (ALTRLNLRNNHFSHLPVKGVLD). Asn-422 is a glycosylation site (N-linked (GlcNAc...) asparagine). Residues 530–581 (NPWDCTCDIMGLKDWTEHANSPVIINEVTCESPAKHAGEILKFLGREAICPE) form the LRRCT 2 domain. A helical membrane pass occupies residues 623-643 (ILGLLVVFILSVCFGAGLFVF). The Cytoplasmic portion of the chain corresponds to 644–846 (VLKRRKGVPN…LEKQTAISQL (203 aa)). Tyr-757 carries the post-translational modification Phosphotyrosine.

The protein belongs to the SLITRK family. In terms of assembly, interacts with PTPRD; this interaction is PTPRD splicing-dependent and may induce pre-synaptic differentiation. Interacts with NTRK2. In the adult, significant expression is detected only in the brain. Broadly expressed in embryonic brain with highest expression in ventricular layer, subventricular zone, cortical plate, pyramidal layer of hippocampus, subicular neuroepithelium, thalamus, hypothalamus and spinal cord.

It localises to the membrane. The protein localises to the cell membrane. The protein resides in the cell projection. It is found in the dendrite. Functionally, it is involved in synaptogenesis. Promotes excitatory synapse differentiation. Suppresses neurite outgrowth. Involved in the negative regulation of NTRK2. This Mus musculus (Mouse) protein is SLIT and NTRK-like protein 2 (Slitrk2).